Here is a 334-residue protein sequence, read N- to C-terminus: MNTILPCQDQYFVGGQSYNCPYSTTTSESSVDVSTETWVSFWAAGLLDNRELQQAPQAQESFSDSNFPLPDLCSWEEAQLSSQLYRNKQLQDTLVQKEEELARLHEENNHLRQYLNSALVKCLEEKAKKLLSSDEFSKAYGKFRKGKRKSKEQRYSPAEIPHPKNAKRNLSSEFANCEEQAGPPVDPWVLQTLGLKDLDTIDDTSSANYSALASHPRRVASTFSQFPDDAVDYKNIPREDMPIDYRGDRTTPLHSTATHGEDFHILSQLSNPPVGLKTLPYYTAHVSPNKTEMAFSTSLSPHCNVKTHSFHQGQAFVRRDEEGGWKFTWVPKQS.

Positions serine 82–leucine 119 form a coiled coil. A disordered region spans residues phenylalanine 143–lysine 167.

This sequence belongs to the GEMC1 family. Highly phosphorylated by CDK2; stimulates initiation of DNA replication.

The protein resides in the nucleus. Regulator of DNA replication. Promotes initiation of chromosomal DNA replication by mediating TOPBP1- and CDK2-dependent recruitment of CDC45L onto replication origins. In Homo sapiens (Human), this protein is Geminin coiled-coil domain-containing protein 1 (GMNC).